Here is a 135-residue protein sequence, read N- to C-terminus: Small ribosomal subunit protein bS16 (135 aa).

The segment at 106–135 is disordered; the sequence is TERRQKRLVVKSRRRQAKKEAEGKAAGAEA. Over residues 109-122 the composition is skewed to basic residues; the sequence is RQKRLVVKSRRRQA.

It belongs to the bacterial ribosomal protein bS16 family.

This is Small ribosomal subunit protein bS16 from Chlorobium phaeobacteroides (strain DSM 266 / SMG 266 / 2430).